The primary structure comprises 835 residues: Protein translocase subunit SecA (835 aa).

ATP-binding positions include glutamine 85, 103-107, and aspartate 492; that span reads GEGKT. The Zn(2+) site is built by cysteine 819, cysteine 821, cysteine 830, and cysteine 831.

It belongs to the SecA family. Monomer and homodimer. Part of the essential Sec protein translocation apparatus which comprises SecA, SecYEG and auxiliary proteins SecDF. Other proteins may also be involved. Requires Zn(2+) as cofactor.

The protein localises to the cell membrane. It localises to the cytoplasm. It catalyses the reaction ATP + H2O + cellular proteinSide 1 = ADP + phosphate + cellular proteinSide 2.. In terms of biological role, part of the Sec protein translocase complex. Interacts with the SecYEG preprotein conducting channel. Has a central role in coupling the hydrolysis of ATP to the transfer of proteins into and across the cell membrane, serving as an ATP-driven molecular motor driving the stepwise translocation of polypeptide chains across the membrane. The chain is Protein translocase subunit SecA from Clostridium botulinum (strain Okra / Type B1).